The chain runs to 247 residues: 4-hydroxy-tetrahydrodipicolinate reductase (247 aa).

Residues 9–14 (GAAGRM), 76–78 (GTT), and 103–106 (APNF) each bind NAD(+). His-133 (proton donor/acceptor) is an active-site residue. (S)-2,3,4,5-tetrahydrodipicolinate is bound at residue His-134. The active-site Proton donor is the Lys-137. 143–144 (GT) serves as a coordination point for (S)-2,3,4,5-tetrahydrodipicolinate.

It belongs to the DapB family.

It is found in the cytoplasm. The catalysed reaction is (S)-2,3,4,5-tetrahydrodipicolinate + NAD(+) + H2O = (2S,4S)-4-hydroxy-2,3,4,5-tetrahydrodipicolinate + NADH + H(+). It carries out the reaction (S)-2,3,4,5-tetrahydrodipicolinate + NADP(+) + H2O = (2S,4S)-4-hydroxy-2,3,4,5-tetrahydrodipicolinate + NADPH + H(+). It participates in amino-acid biosynthesis; L-lysine biosynthesis via DAP pathway; (S)-tetrahydrodipicolinate from L-aspartate: step 4/4. Catalyzes the conversion of 4-hydroxy-tetrahydrodipicolinate (HTPA) to tetrahydrodipicolinate. This is 4-hydroxy-tetrahydrodipicolinate reductase from Beutenbergia cavernae (strain ATCC BAA-8 / DSM 12333 / CCUG 43141 / JCM 11478 / NBRC 16432 / NCIMB 13614 / HKI 0122).